Consider the following 510-residue polypeptide: NAD(P)H-quinone oxidoreductase subunit 2 A, chloroplastic (510 aa).

13 helical membrane-spanning segments follow: residues 24 to 44, 57 to 77, 99 to 119, 124 to 144, 149 to 169, 183 to 203, 227 to 247, 295 to 315, 323 to 343, 354 to 374, 395 to 415, 418 to 438, and 484 to 504; these read LLLF…GLIL, IPWL…ALLF, IFQF…VEYI, MAIT…MFLC, LITI…LSGY, YLLM…WLYG, PGIS…LSLA, WHLL…LIAI, MLAY…IVGD, YMLF…SFGL, ALSL…AGFF, LHLF…IGLL, and MIVC…IIAI.

It belongs to the complex I subunit 2 family. In terms of assembly, NDH is composed of at least 16 different subunits, 5 of which are encoded in the nucleus.

It localises to the plastid. The protein resides in the chloroplast thylakoid membrane. It carries out the reaction a plastoquinone + NADH + (n+1) H(+)(in) = a plastoquinol + NAD(+) + n H(+)(out). The catalysed reaction is a plastoquinone + NADPH + (n+1) H(+)(in) = a plastoquinol + NADP(+) + n H(+)(out). NDH shuttles electrons from NAD(P)H:plastoquinone, via FMN and iron-sulfur (Fe-S) centers, to quinones in the photosynthetic chain and possibly in a chloroplast respiratory chain. The immediate electron acceptor for the enzyme in this species is believed to be plastoquinone. Couples the redox reaction to proton translocation, and thus conserves the redox energy in a proton gradient. This chain is NAD(P)H-quinone oxidoreductase subunit 2 A, chloroplastic, found in Ranunculus macranthus (Large buttercup).